A 51-amino-acid chain; its full sequence is Zinc metalloproteinase-disintegrin-like crovidisin (51 aa).

Positions 1-12 (AMVTKNNGDLDK) constitute a Peptidase M12B domain. Residues 13–18 (SGTECR) form the Disintegrin domain. An N-linked (GlcNAc...) asparagine glycan is attached at Asn29.

It belongs to the venom metalloproteinase (M12B) family. P-III subfamily. P-IIIa sub-subfamily. As to quaternary structure, monomer. Zn(2+) serves as cofactor. As to expression, expressed by the venom gland.

Its subcellular location is the secreted. Snake venom zinc metalloproteinase-disintegrin-like that blocks the interaction between platelets and collagen fibers through its binding to collagen fibers, resulting in the blockade of collagen-mediated platelet functions such as adhesion, release reaction, thromboxane formation, and aggregation. Binds selectively to collagen type I with high affinity. Also exerts proteolytic activity to matrix. The sequence is that of Zinc metalloproteinase-disintegrin-like crovidisin from Crotalus viridis viridis (Prairie rattlesnake).